The chain runs to 206 residues: Protein phosphatase inhibitor 2 (206 aa).

The interval 1-36 is disordered; that stretch reads MAASTASHRPIKGILKNKTSAASPPVVPSAEQPRPI. Alanine 2 carries the post-translational modification N-acetylalanine. The segment at 12–17 is required for binding PPP1CC; the sequence is KGILKN. Residues 44 to 56 form a required for binding the 'RVXF' binding groove of PPP1CC region; sequence KSQKWDEMNILAT. The residue at position 45 (serine 45) is a Phosphoserine; by ATM. Threonine 74 bears the Phosphothreonine mark. The disordered stretch occupies residues 75–143; the sequence is PYHNMIGDDE…EREKKRQFEM (69 aa). A compositionally biased stretch (acidic residues) spans 81-92; it reads GDDEDAYSDSEG. A phosphoserine mark is found at serine 88 and serine 90. 2 positions are modified to phosphothreonine: threonine 97 and threonine 117. Basic and acidic residues predominate over residues 111–121; the sequence is SEPKYRTREQE. Residues serine 122, serine 123, and serine 131 each carry the phosphoserine modification. Residues 122-131 are compositionally biased toward acidic residues; that stretch reads SSGEEDNDLS. Residues 132 to 143 are compositionally biased toward basic and acidic residues; sequence PEEREKKRQFEM. The required for binding PPP1CC catalytic center, displacing metal ions and inhibition of PPP1CC catalytic activity stretch occupies residues 148–151; the sequence is HYNE. The tract at residues 164 to 206 is disordered; that stretch reads KDLHDDDEDEEMAETADGDSMNVEESSQGSTTSDHLQHKSQSS. The segment covering 168 to 180 has biased composition (acidic residues); it reads DDDEDEEMAETAD. The span at 186 to 206 shows a compositional bias: polar residues; it reads VEESSQGSTTSDHLQHKSQSS.

The protein belongs to the protein phosphatase inhibitor 2 family. Heterodimer with PP1. Post-translationally, phosphorylation on Ser-45 by ATM activates PP1 by dissociating the PP1-PPP1R2 complex. Phosphorylation on Thr-74 by GSK3 activates PP1 by dissociating the PP1-PPP1R2 complex.

Inhibitor of protein-phosphatase 1. In Mus musculus (Mouse), this protein is Protein phosphatase inhibitor 2 (Ppp1r2).